Reading from the N-terminus, the 291-residue chain is Acetyl-coenzyme A carboxylase carboxyl transferase subunit beta (291 aa).

The CoA carboxyltransferase N-terminal domain maps to 34-291 (MWTKCSNCNS…LILHGVNKYE (258 aa)). Positions 38, 41, 57, and 60 each coordinate Zn(2+). The segment at 38–60 (CSNCNSMIYYEDLENNKYVCTKC) adopts a C4-type zinc-finger fold.

Belongs to the AccD/PCCB family. In terms of assembly, acetyl-CoA carboxylase is a heterohexamer composed of biotin carboxyl carrier protein (AccB), biotin carboxylase (AccC) and two subunits each of ACCase subunit alpha (AccA) and ACCase subunit beta (AccD). Zn(2+) is required as a cofactor.

Its subcellular location is the cytoplasm. It catalyses the reaction N(6)-carboxybiotinyl-L-lysyl-[protein] + acetyl-CoA = N(6)-biotinyl-L-lysyl-[protein] + malonyl-CoA. Its pathway is lipid metabolism; malonyl-CoA biosynthesis; malonyl-CoA from acetyl-CoA: step 1/1. In terms of biological role, component of the acetyl coenzyme A carboxylase (ACC) complex. Biotin carboxylase (BC) catalyzes the carboxylation of biotin on its carrier protein (BCCP) and then the CO(2) group is transferred by the transcarboxylase to acetyl-CoA to form malonyl-CoA. The sequence is that of Acetyl-coenzyme A carboxylase carboxyl transferase subunit beta from Clostridium botulinum (strain Alaska E43 / Type E3).